The primary structure comprises 760 residues: Xaa-Pro dipeptidyl-peptidase (760 aa).

Residues Ser349, Asp469, and His499 each act as charge relay system in the active site.

It belongs to the peptidase S15 family. Homodimer.

Its subcellular location is the cytoplasm. It catalyses the reaction Hydrolyzes Xaa-Pro-|- bonds to release unblocked, N-terminal dipeptides from substrates including Ala-Pro-|-p-nitroanilide and (sequentially) Tyr-Pro-|-Phe-Pro-|-Gly-Pro-|-Ile.. Removes N-terminal dipeptides sequentially from polypeptides having unsubstituted N-termini provided that the penultimate residue is proline. The sequence is that of Xaa-Pro dipeptidyl-peptidase from Streptococcus pyogenes serotype M28 (strain MGAS6180).